Here is a 229-residue protein sequence, read N- to C-terminus: Chloride conductance regulatory protein ICln (229 aa).

Belongs to the pICln (TC 1.A.47) family. In terms of assembly, homooligomer.

The protein localises to the cytoplasm. It localises to the nucleus. In terms of biological role, may participate in cellular volume control by activation of a swelling-induced chloride conductance pathway. This Arabidopsis thaliana (Mouse-ear cress) protein is Chloride conductance regulatory protein ICln.